A 54-amino-acid chain; its full sequence is Ovomucoid (54 aa).

The Kazal-like domain occupies 4-54; it reads VDCSDYPKPACTLEYMPLCGSDNKTYGNKCNFCNAVVDSNGTLTLSHFGKC. Disulfide bonds link Cys6–Cys36, Cys14–Cys33, and Cys22–Cys54. N-linked (GlcNAc...) asparagine glycosylation is present at Asn43.

It localises to the secreted. This is Ovomucoid from Dendrocygna arcuata (Wandering whistling-duck).